A 292-amino-acid chain; its full sequence is Phosphatidylserine decarboxylase proenzyme (292 aa).

Catalysis depends on charge relay system; for autoendoproteolytic cleavage activity residues Asp-98, His-153, and Ser-254. Catalysis depends on Ser-254, which acts as the Schiff-base intermediate with substrate; via pyruvic acid; for decarboxylase activity. Position 254 is a pyruvic acid (Ser); by autocatalysis (Ser-254).

It belongs to the phosphatidylserine decarboxylase family. PSD-B subfamily. Prokaryotic type I sub-subfamily. As to quaternary structure, heterodimer of a large membrane-associated beta subunit and a small pyruvoyl-containing alpha subunit. The cofactor is pyruvate. Post-translationally, is synthesized initially as an inactive proenzyme. Formation of the active enzyme involves a self-maturation process in which the active site pyruvoyl group is generated from an internal serine residue via an autocatalytic post-translational modification. Two non-identical subunits are generated from the proenzyme in this reaction, and the pyruvate is formed at the N-terminus of the alpha chain, which is derived from the carboxyl end of the proenzyme. The autoendoproteolytic cleavage occurs by a canonical serine protease mechanism, in which the side chain hydroxyl group of the serine supplies its oxygen atom to form the C-terminus of the beta chain, while the remainder of the serine residue undergoes an oxidative deamination to produce ammonia and the pyruvoyl prosthetic group on the alpha chain. During this reaction, the Ser that is part of the protease active site of the proenzyme becomes the pyruvoyl prosthetic group, which constitutes an essential element of the active site of the mature decarboxylase.

It localises to the cell membrane. The catalysed reaction is a 1,2-diacyl-sn-glycero-3-phospho-L-serine + H(+) = a 1,2-diacyl-sn-glycero-3-phosphoethanolamine + CO2. It participates in phospholipid metabolism; phosphatidylethanolamine biosynthesis; phosphatidylethanolamine from CDP-diacylglycerol: step 2/2. In terms of biological role, catalyzes the formation of phosphatidylethanolamine (PtdEtn) from phosphatidylserine (PtdSer). This is Phosphatidylserine decarboxylase proenzyme from Halorhodospira halophila (strain DSM 244 / SL1) (Ectothiorhodospira halophila (strain DSM 244 / SL1)).